The following is a 239-amino-acid chain: Ribonuclease PH (239 aa).

Phosphate-binding positions include arginine 87 and 125–127; that span reads GTR.

It belongs to the RNase PH family. In terms of assembly, homohexameric ring arranged as a trimer of dimers.

The enzyme catalyses tRNA(n+1) + phosphate = tRNA(n) + a ribonucleoside 5'-diphosphate. Its function is as follows. Phosphorolytic 3'-5' exoribonuclease that plays an important role in tRNA 3'-end maturation. Removes nucleotide residues following the 3'-CCA terminus of tRNAs; can also add nucleotides to the ends of RNA molecules by using nucleoside diphosphates as substrates, but this may not be physiologically important. Probably plays a role in initiation of 16S rRNA degradation (leading to ribosome degradation) during starvation. This chain is Ribonuclease PH, found in Cyanothece sp. (strain PCC 7425 / ATCC 29141).